The primary structure comprises 268 residues: Nickel import ATP-binding protein NikE (268 aa).

Positions 4 to 252 (LNISGLSHHY…SSDAGRVLQN (249 aa)) constitute an ABC transporter domain. An ATP-binding site is contributed by 45 to 52 (GRSGCGKS).

This sequence belongs to the ABC transporter superfamily. Nickel importer (TC 3.A.1.5.3) family. In terms of assembly, the complex is composed of two ATP-binding proteins (NikD and NikE), two transmembrane proteins (NikB and NikC) and a solute-binding protein (NikA).

It localises to the cell inner membrane. It carries out the reaction Ni(2+)(out) + ATP + H2O = Ni(2+)(in) + ADP + phosphate + H(+). Functionally, part of the ABC transporter complex NikABCDE involved in nickel import. Responsible for energy coupling to the transport system. In Escherichia coli (strain K12), this protein is Nickel import ATP-binding protein NikE.